The following is a 419-amino-acid chain: F-box/FBD/LRR-repeat protein At4g26340 (419 aa).

One can recognise an F-box domain in the interval 1-53 (MDRISQLSDDLLLQILSFIPGKDVVATSLLSKRWQSLWMLVSELEYDDSYHTG). 7 LRR repeats span residues 55–81 (YKSFSQFVYRSLLSNNAPVIKHLHLNL), 132–159 (TLRLINFVLLDVPSSVCLPSLKVLHLKT), 160–185 (VDYEDDASLPSLLFGCPNLEELFVER), 187–208 (DQDLEMDVTFVVPSLRRLSMID), 226–253 (YLNITDDAVYDVRQIENMPELVEAHVDI), 254–284 (TQGVTHKFLRALTSVRQLSLCLSLSEVMCPS), and 299–324 (VVKGWWDLLTSMLQDSPKLQSLKLID). Residues 339-389 (GWKLPSSVPECLLFSLEAFEWIGYKGRRGDREVATYVLKNAACLRTAKFSP) form the FBD domain.

The chain is F-box/FBD/LRR-repeat protein At4g26340 from Arabidopsis thaliana (Mouse-ear cress).